The primary structure comprises 284 residues: Origin of replication complex subunit 6 (284 aa).

It belongs to the ORC6 family. Component of the origin recognition complex (ORC) composed of at least ORC1 (ORC1A or ORC1B), ORC2, ORC3, ORC4, ORC5 and ORC6. ORC is regulated in a cell-cycle and development dependent manner. It is sequentially assembled at the exit from anaphase of mitosis and disassembled as cells enter S phase. Interacts directly with ORC2, ORC3, ORC4 and ORC5. Follow a cell-cycle regulation with a peak at the G1/S-phase. Mostly expressed in siliques, flowers, flower buds and mature leaves, and, to a lower exent, in roots, leaves and stems.

Its subcellular location is the nucleus. In terms of biological role, component of the origin recognition complex (ORC) that binds origins of replication. DNA-binding is ATP-dependent. The specific DNA sequences that define origins of replication have not been identified yet. ORC is required to assemble the pre-replication complex necessary to initiate DNA replication. This Arabidopsis thaliana (Mouse-ear cress) protein is Origin of replication complex subunit 6.